Consider the following 392-residue polypeptide: Putative glutamate--cysteine ligase 2 (392 aa).

A disordered region spans residues 1 to 21; sequence MMPVSGWRAVSSAPASSSAGR. Positions 9–19 are enriched in low complexity; the sequence is AVSSAPASSSA.

The protein belongs to the glutamate--cysteine ligase type 2 family. YbdK subfamily.

The catalysed reaction is L-cysteine + L-glutamate + ATP = gamma-L-glutamyl-L-cysteine + ADP + phosphate + H(+). In terms of biological role, ATP-dependent carboxylate-amine ligase which exhibits weak glutamate--cysteine ligase activity. The chain is Putative glutamate--cysteine ligase 2 from Mycobacterium ulcerans (strain Agy99).